Consider the following 951-residue polypeptide: Pheromone-regulated membrane protein 10 (951 aa).

Polar residues-rich tracts occupy residues 1–10 (MSSSYGNNGD), 68–84 (GGST…NVGS), and 92–104 (RTAS…NRRQ). 3 disordered regions span residues 1–293 (MSSS…EDPI), 313–366 (AGKS…TMVS), and 433–487 (NDSS…LPNF). Residues 126 to 135 (DDDDEEEEEH) are compositionally biased toward acidic residues. The segment covering 219 to 234 (PHQETNDGRNSAESHS) has biased composition (basic and acidic residues). Composition is skewed to polar residues over residues 318-332 (PGTQ…SSEH), 354-366 (PFNQ…TMVS), and 468-484 (SQTN…SMNL). 10 helical membrane passes run 635–655 (WVSV…AFGG), 657–677 (WINM…QFIV), 687–707 (VFEV…GSIP), 711–731 (ICFG…YIIL), 753–773 (IIYS…FGWI), 786–806 (NISP…LGLI), 811–831 (WTQL…TYFS), 841–861 (FTSA…SRIW), 863–883 (GFAV…GVAS), and 918–938 (VTMI…TLFI).

This sequence belongs to the ThrE exporter (TC 2.A.79) family.

It is found in the membrane. The protein is Pheromone-regulated membrane protein 10 of Kluyveromyces lactis (strain ATCC 8585 / CBS 2359 / DSM 70799 / NBRC 1267 / NRRL Y-1140 / WM37) (Yeast).